The sequence spans 580 residues: Frizzled and smoothened-like protein K (580 aa).

The first 18 residues, 1 to 18 (MRVLFILFLFYFYTYTEA), serve as a signal peptide directing secretion. Residues 19-236 (QQYYPIDPTG…QWDNIFDTSD (218 aa)) lie on the Extracellular side of the membrane. The 130-residue stretch at 25 to 154 (DPTGKCEQYI…SSDYNLTTYG (130 aa)) folds into the FZ domain. 5 N-linked (GlcNAc...) asparagine glycosylation sites follow: Asn52, Asn97, Asn149, Asn170, and Asn186. Residues 237–257 (AISLVSLLCSVYLFITYMVIN) traverse the membrane as a helical segment. At 258-264 (PKRNKYD) the chain is on the cytoplasmic side. Residues 265 to 285 (YFFSFFVLSIILMSIAGTIGF) traverse the membrane as a helical segment. At 286–308 (SVGGTRKLLCPEINRRGVYTDPA) the chain is on the extracellular side. A helical membrane pass occupies residues 309–329 (VAAAGWIFQFAIINAILWFSI). Residues 330–349 (NSFELWFQIKFIKRKLHLIK) are Cytoplasmic-facing. A helical transmembrane segment spans residues 350–370 (FYILAVLVISIALSVPLSAIG). At 371–391 (EFNAGLGNFVVWIESGKYQNW) the chain is on the extracellular side. A helical transmembrane segment spans residues 392-412 (FFWGPLGIVLTVGTTFIGLVI). At 413–434 (WEIYKIVSSTNKSDFFKLQLKP) the chain is on the cytoplasmic side. The chain crosses the membrane as a helical span at residues 435–455 (LMNMLLIYLTFVYLFGYNFYI). The Extracellular portion of the chain corresponds to 456 to 490 (HNSLNGFYGSSEEFKNCIISTDGKDCRIQGPPYSS). A helical membrane pass occupies residues 491–511 (ILMFVFCLRIYGVYCIALYGF). Over 512-580 (SPKTRSIWSN…SMEPDEIILR (69 aa)) the chain is Cytoplasmic. Residues 514–519 (KTRSIW) carry the Lys-Thr-X-X-X-Trp motif, mediates interaction with the PDZ domain of Dvl family members motif. A disordered region spans residues 542-580 (TTKGGTSSTDIKMSTNNNSNMDSGGGKSSSMEPDEIILR). Residues 551–563 (DIKMSTNNNSNMD) are compositionally biased toward polar residues.

Belongs to the G-protein coupled receptor Fz/Smo family.

Its subcellular location is the membrane. The chain is Frizzled and smoothened-like protein K (fslK) from Dictyostelium discoideum (Social amoeba).